Here is a 292-residue protein sequence, read N- to C-terminus: MAEITAALVKELREKTDAPMMECKKALTEAEGDLARAEEILRVKLGNKASKAAARVTAEGLIGLYIAADGKQGAVIEVNCETDFVAKNTDFIDFINKLAELVATQNPGDVAALSALPFGEGTVETTRTALVGKIGENISVRRFERIQTPNSLASYVHGGKIGVLVEFSGAEEVGKDLAMHIAATKPKALNADGVNAEDIAAERSVAEQKAAESGKPAEIVAKMVEGSVQKFLKEVTLLSQPFVKNDKQTIEQMLKEKGASITKFVLFVVGEGIEKKTADFASEVAAAAAGRA.

The tract at residues Thr82 to Val85 is involved in Mg(2+) ion dislocation from EF-Tu.

The protein belongs to the EF-Ts family.

It localises to the cytoplasm. Its function is as follows. Associates with the EF-Tu.GDP complex and induces the exchange of GDP to GTP. It remains bound to the aminoacyl-tRNA.EF-Tu.GTP complex up to the GTP hydrolysis stage on the ribosome. This chain is Elongation factor Ts, found in Bordetella parapertussis (strain 12822 / ATCC BAA-587 / NCTC 13253).